We begin with the raw amino-acid sequence, 368 residues long: Glutamate 5-kinase (368 aa).

An ATP-binding site is contributed by K9. 3 residues coordinate substrate: S49, D136, and N148. Residues T168–D169 and T210–K216 contribute to the ATP site. A PUA domain is found at A275–E353.

Belongs to the glutamate 5-kinase family.

Its subcellular location is the cytoplasm. It catalyses the reaction L-glutamate + ATP = L-glutamyl 5-phosphate + ADP. Its pathway is amino-acid biosynthesis; L-proline biosynthesis; L-glutamate 5-semialdehyde from L-glutamate: step 1/2. In terms of biological role, catalyzes the transfer of a phosphate group to glutamate to form L-glutamate 5-phosphate. This Haemophilus influenzae (strain PittEE) protein is Glutamate 5-kinase.